The chain runs to 76 residues: Small ribosomal subunit protein bS18 (76 aa).

This sequence belongs to the bacterial ribosomal protein bS18 family. As to quaternary structure, part of the 30S ribosomal subunit. Forms a tight heterodimer with protein bS6.

Binds as a heterodimer with protein bS6 to the central domain of the 16S rRNA, where it helps stabilize the platform of the 30S subunit. The sequence is that of Small ribosomal subunit protein bS18 from Tolumonas auensis (strain DSM 9187 / NBRC 110442 / TA 4).